The following is a 373-amino-acid chain: Dual-specificity RNA methyltransferase RlmN (373 aa).

Glu-94 serves as the catalytic Proton acceptor. The Radical SAM core domain occupies 100–339; sequence EEDRATLCVS…VIVRKTRGDD (240 aa). Cys-107 and Cys-344 are disulfide-bonded. Residues Cys-114, Cys-118, and Cys-121 each contribute to the [4Fe-4S] cluster site. S-adenosyl-L-methionine contacts are provided by residues 168–169, Ser-200, 222–224, and Asn-301; these read GE and SIH. Cys-344 functions as the S-methylcysteine intermediate in the catalytic mechanism.

The protein belongs to the radical SAM superfamily. RlmN family. The cofactor is [4Fe-4S] cluster.

The protein resides in the cytoplasm. The enzyme catalyses adenosine(2503) in 23S rRNA + 2 reduced [2Fe-2S]-[ferredoxin] + 2 S-adenosyl-L-methionine = 2-methyladenosine(2503) in 23S rRNA + 5'-deoxyadenosine + L-methionine + 2 oxidized [2Fe-2S]-[ferredoxin] + S-adenosyl-L-homocysteine. It carries out the reaction adenosine(37) in tRNA + 2 reduced [2Fe-2S]-[ferredoxin] + 2 S-adenosyl-L-methionine = 2-methyladenosine(37) in tRNA + 5'-deoxyadenosine + L-methionine + 2 oxidized [2Fe-2S]-[ferredoxin] + S-adenosyl-L-homocysteine. Functionally, specifically methylates position 2 of adenine 2503 in 23S rRNA and position 2 of adenine 37 in tRNAs. m2A2503 modification seems to play a crucial role in the proofreading step occurring at the peptidyl transferase center and thus would serve to optimize ribosomal fidelity. In Shewanella loihica (strain ATCC BAA-1088 / PV-4), this protein is Dual-specificity RNA methyltransferase RlmN.